Here is a 207-residue protein sequence, read N- to C-terminus: Large ribosomal subunit protein uL3 (207 aa).

The protein belongs to the universal ribosomal protein uL3 family. Part of the 50S ribosomal subunit. Forms a cluster with proteins L14 and L19.

Its function is as follows. One of the primary rRNA binding proteins, it binds directly near the 3'-end of the 23S rRNA, where it nucleates assembly of the 50S subunit. The protein is Large ribosomal subunit protein uL3 of Fervidobacterium nodosum (strain ATCC 35602 / DSM 5306 / Rt17-B1).